Reading from the N-terminus, the 291-residue chain is Phycobilisome 32.1 kDa linker polypeptide, phycocyanin-associated, rod 1 (291 aa).

One can recognise a PBS-linker domain in the interval 2-179 (AITTAASRLG…LYRGYANSDR (178 aa)). One can recognise a CpcD-like domain in the interval 236 to 288 (SKLFRVEITAISAPGYPKVRRSNKAVIVPFEQLNQTLQQINRLGGKVASITPA).

The protein belongs to the phycobilisome linker protein family. In terms of assembly, part of 2 PBS rod complexes, the conventional CpcG-PBS rod and a photosystem I-specific CpcL-PBS rod, both of which include ferredoxin--NADP reductase (petH). CpcG-PBS has on average 3 stacked phycocyanin hexamers (PC, CpcA and CpcB). Linker CpcG connects the PC stack to the thylakoid, the hexamers are linked by 1 copy of CpcC1, 1 copy of CpcC2 and the stack is terminated by a single copy of CpcD. The CpcL-PBS has on average 5 stacked phycocyanin hexamers (PC, CpcA and CpcB). Linker CpcL connects the PC stack to the thylakoid, the hexamers are linked by 1 copy of CpcC1, 3 copies of CpcC2 and the stack is terminated by a single copy of CpcD.

The protein resides in the cellular thylakoid membrane. Rod linker protein, connecting hexameric phycocyanin (PC, made by cpcA and cpcB) rods in the phycobilisome (PBS). PC is the major phycobiliprotein in PBS rods. Linker polypeptides determine the state of aggregation and the location of the disk-shaped phycobiliprotein units within the phycobilisome and modulate their spectroscopic properties in order to mediate a directed and optimal energy transfer. The protein is Phycobilisome 32.1 kDa linker polypeptide, phycocyanin-associated, rod 1 (cpcC1) of Synechocystis sp. (strain ATCC 27184 / PCC 6803 / Kazusa).